The following is a 1026-amino-acid chain: Vacuolar protein sorting-associated protein 18 homolog (1026 aa).

Positions 858 to 896 (IVDFLKRNKQRLEKLERSMKEATEIASEIRDKQEKLKNR) form a coiled coil. Residues 906-932 (CSHCARPISGRAFNVHSCRHFFHRECL) form an RING-type; degenerate zinc finger.

Probable core component of at least two putative endosomal tethering complexes, the homotypic fusion and vacuole protein sorting (HOPS) complex and the class C core vacuole/endosome tethering (CORVET) complex. Their common core is composed of the class C Vps proteins vps-11, vps-16 and vps-18, which in HOPS further associates with vps-33.1, vps-39 and vps-41 and in CORVET with vps-8 and vps-33.2. In hermaphrodites, expressed in coelomocytes and gonadal sheath cells.

The protein resides in the cytoplasm. It is found in the late endosome membrane. It localises to the lysosome membrane. Its subcellular location is the early endosome. The protein localises to the cytoplasmic vesicle. The protein resides in the autophagosome. It is found in the clathrin-coated vesicle. Plays a role in vesicle-mediated protein trafficking to lysosomal compartments including the endocytic membrane transport and autophagic pathways. Believed to act as a core component of the putative HOPS and CORVET endosomal tethering complexes which are proposed to be involved in the rab-5-to-rab-7 endosome conversion probably implicating sand-1, and via binding SNAREs and SNARE complexes to mediate tethering and docking events during SNARE-mediated membrane fusion. The HOPS complex is proposed to be recruited to rab-7 on the late endosomal membrane and to regulate late endocytic, phagocytic and autophagic traffic towards lysosomes. Within the HOPS complex, contributes to the normal development of gut granules in intestinal cells of the embryo, and also promotes the trafficking of embryonic intestinal gut granules away from lysosomes. The CORVET complex is proposed to function as a rab-5 effector to mediate early endosome fusion probably in specific endosome subpopulations. Required for fusion of endosomes and autophagosomes with lysosomes. Plays a role in the degradation of apoptotic cells during programmed cell death. The protein is Vacuolar protein sorting-associated protein 18 homolog of Caenorhabditis elegans.